Here is a 214-residue protein sequence, read N- to C-terminus: Holliday junction branch migration complex subunit RuvA (214 aa).

Residues 1 to 63 (MISSLRGTVL…EDSLTLFGFP (63 aa)) are domain I. A domain II region spans residues 64 to 139 (GPDELRAFEL…KLFVTQPRAR (76 aa)). Residues 139-143 (RSATS) are flexible linker. The interval 144–214 (AASTVTADVV…AAPTGQAADR (71 aa)) is domain III.

Belongs to the RuvA family. As to quaternary structure, homotetramer. Forms an RuvA(8)-RuvB(12)-Holliday junction (HJ) complex. HJ DNA is sandwiched between 2 RuvA tetramers; dsDNA enters through RuvA and exits via RuvB. An RuvB hexamer assembles on each DNA strand where it exits the tetramer. Each RuvB hexamer is contacted by two RuvA subunits (via domain III) on 2 adjacent RuvB subunits; this complex drives branch migration. In the full resolvosome a probable DNA-RuvA(4)-RuvB(12)-RuvC(2) complex forms which resolves the HJ.

It localises to the cytoplasm. Its function is as follows. The RuvA-RuvB-RuvC complex processes Holliday junction (HJ) DNA during genetic recombination and DNA repair, while the RuvA-RuvB complex plays an important role in the rescue of blocked DNA replication forks via replication fork reversal (RFR). RuvA specifically binds to HJ cruciform DNA, conferring on it an open structure. The RuvB hexamer acts as an ATP-dependent pump, pulling dsDNA into and through the RuvAB complex. HJ branch migration allows RuvC to scan DNA until it finds its consensus sequence, where it cleaves and resolves the cruciform DNA. This Clavibacter michiganensis subsp. michiganensis (strain NCPPB 382) protein is Holliday junction branch migration complex subunit RuvA.